A 298-amino-acid polypeptide reads, in one-letter code: Olfactory receptor 5AK3 (298 aa).

At 1–25 (MGRGNSTEVTEFHLLGFGVQHEFQH) the chain is on the extracellular side. Asn5 carries an N-linked (GlcNAc...) asparagine glycan. A helical membrane pass occupies residues 26–46 (VLFIVLLLIYVTSLIGNIGMI). Residues 47–54 (LLIKTDSR) are Cytoplasmic-facing. Residues 55–75 (LQTPMYFFPQHLAFVDICYTS) traverse the membrane as a helical segment. The Extracellular segment spans residues 76 to 99 (AITPKMLQSFTEENNLITFRGCVI). Cysteines 97 and 189 form a disulfide. The helical transmembrane segment at 100-120 (QFLVYATFATSDCYLLAIMAM) threads the bilayer. Topologically, residues 121–133 (DCYVAICKPLRYP) are cytoplasmic. A helical transmembrane segment spans residues 134-154 (MIMSQTVYIQLVAGSYIIGSI). Asn155 carries an N-linked (GlcNAc...) asparagine glycan. The Extracellular segment spans residues 155-196 (NASVHTGFTFSLSFCKSNKINHFFCDGLPILALSCSNIDINI). A helical transmembrane segment spans residues 197-217 (ILDVVFVGFDLMFTELVIIFS). Topologically, residues 218-237 (YIYIMVTILKMSSTAGRKKS) are cytoplasmic. Residues 238–258 (FSTCASHLTAVTIFYGTLSYM) form a helical membrane-spanning segment. Residues 259–271 (YLQPQSNNSQENM) are Extracellular-facing. Asn265 is a glycosylation site (N-linked (GlcNAc...) asparagine). The helical transmembrane segment at 272–292 (KVASIFYGTVIPMLNPLIYSL) threads the bilayer. At 293-298 (RNKEGK) the chain is on the cytoplasmic side.

Belongs to the G-protein coupled receptor 1 family.

The protein resides in the cell membrane. In terms of biological role, odorant receptor. The sequence is that of Olfactory receptor 5AK3 (OR5AK3P) from Homo sapiens (Human).